Consider the following 345-residue polypeptide: Phosphate acyltransferase (345 aa).

Belongs to the PlsX family. Homodimer. Probably interacts with PlsY.

The protein localises to the cytoplasm. The enzyme catalyses a fatty acyl-[ACP] + phosphate = an acyl phosphate + holo-[ACP]. The protein operates within lipid metabolism; phospholipid metabolism. In terms of biological role, catalyzes the reversible formation of acyl-phosphate (acyl-PO(4)) from acyl-[acyl-carrier-protein] (acyl-ACP). This enzyme utilizes acyl-ACP as fatty acyl donor, but not acyl-CoA. This is Phosphate acyltransferase from Proteus mirabilis (strain HI4320).